The primary structure comprises 102 residues: Small ribosomal subunit protein uS10 (102 aa).

This sequence belongs to the universal ribosomal protein uS10 family. Part of the 30S ribosomal subunit.

Involved in the binding of tRNA to the ribosomes. The protein is Small ribosomal subunit protein uS10 of Ligilactobacillus salivarius (strain UCC118) (Lactobacillus salivarius).